We begin with the raw amino-acid sequence, 202 residues long: Tetranectin (202 aa).

The signal sequence occupies residues 1-21; the sequence is MELWGAYLLLCLFSLLTQVTT. T25 carries an O-linked (GalNAc...) threonine glycan. 3 disulfide bridges follow: C71/C81, C98/C197, and C173/C189. Residues 77 to 198 enclose the C-type lectin domain; the sequence is VHMKCFLAFT…CRDQLPYICQ (122 aa).

In terms of assembly, homotrimer. As to expression, found in plasma.

Its subcellular location is the secreted. In terms of biological role, tetranectin binds to plasminogen and to isolated kringle 4. May be involved in the packaging of molecules destined for exocytosis. Plays a role in retinal function. The chain is Tetranectin (CLEC3B) from Homo sapiens (Human).